The following is a 357-amino-acid chain: Acyl-coenzyme A:6-aminopenicillanic-acid-acyltransferase 40 kDa form (357 aa).

2 residues coordinate 6-aminopenicillanate: D121 and R310.

It belongs to the peptidase C45 family. In terms of assembly, the active form of the enzyme results from processing of the 40-kDa monomeric precursor to a heterodimer containing subunits of 11 and 29 kDa. The pre-AAT protein is synthesized as 40 kDa precursor which is then self-processed into an 11 kDa (protein A) and a 29 kDa (protein B). The B protein carries AAT activity.

Its subcellular location is the peroxisome matrix. It carries out the reaction isopenicillin N + phenylacetyl-CoA + H2O = penicillin G + L-2-aminoadipate + CoA + H(+). The protein operates within antibiotic biosynthesis; penicillin G biosynthesis; penicillin G from L-alpha-aminoadipate and L-cysteine and L-valine: step 3/3. Nonribosomal peptide synthetase; part of the gene cluster that mediates the biosynthesis of penicillin, the world's most important antibiotic. AatA catalyzes the exchange of the alpha-aminoadipyl side chain of isopenicillin N for phenylacetic acid to yield penicillin. This step occurs in the peroxisomal matrix and the penM and paaT transporters are involved in the isopenicillin N and phenylacetic acid import into the peroxisome, respectively. The penicillin biosynthesis occurs via 3 enzymatic steps, the first corresponding to the production of the tripeptide N-[(5S)-5-amino-5-carboxypentanoyl]-L-cysteinyl-D-valine (LLD-ACV or ACV) by the NRPS acvA. The tripeptide ACV is then cyclized to isopenicillin N (IPN) by the isopenicillin N synthase ipnA that forms the beta-lactam nucleus. Finally, the alpha-aminoadipyl side chain is exchanged for phenylacetic acid by the isopenicillin N acyltransferase penDE to yield penicillin in the peroxisomal matrix. This is Acyl-coenzyme A:6-aminopenicillanic-acid-acyltransferase 40 kDa form from Emericella nidulans (strain FGSC A4 / ATCC 38163 / CBS 112.46 / NRRL 194 / M139) (Aspergillus nidulans).